The chain runs to 597 residues: MATAPSPTTMGTYSSLISTNSFSTFLPNKSQLSLSGKSKHYVARRSSISCKATNNNNSNNQNEQQEESSRLLGKLDRRNILIGLGGLYGATTLDRKPFAFADPIAPPDLTTCKPAEITPGGSETVPCCPPVTTKIKTFKPDLSIPLRTSPAAHQVTDEYLAKFKKAQAAMRALPDDDPRSMVQQAKVHCAYCNGAYPQVGFTDNDIQVHFSWLFFPFHRMYLYFYERILGKLIDDPTFALPYWNWDSPVGFPIPDIYTDTSSPLYDQYRNADHQPPVLVDLSYGGKDDDVDEQTRIDENLAIMYRQMVSGAKTPDLFFGHAYRAGNLNTGKYPGTIENMPHNNIHIWVGDPSQTHQEDMGNFYSAGRDPLFYAHHANVDRMWNIWKTLGGKRKDITDTDWLDAEFLFYDENAELVRVKVRDSLEPEKQLRYNYEPVSLPWLFTKPTARKTKNKTKAKVAATQLTSKFPATLVEVTTVEVARPKPRKRSKKEKVDEEELLIIKDIEFEGTEAVKFDVFINDDAESLSRRDKSEFAGSFVHVPQGKTTKAKTKTNLKLGITDLLEDLGAEDDSSVLVTLVPRVSNSPITIGGFKIEYSS.

Residues 1–49 (MATAPSPTTMGTYSSLISTNSFSTFLPNKSQLSLSGKSKHYVARRSSIS) constitute a chloroplast transit peptide. The interval 49–70 (SCKATNNNNSNNQNEQQEESSR) is disordered. A thylakoid-targeting transit peptide spans 50–101 (CKATNNNNSNNQNEQQEESSRLLGKLDRRNILIGLGGLYGATTLDRKPFAFA). The segment covering 54 to 63 (NNNNSNNQNE) has biased composition (low complexity). 2 disulfides stabilise this stretch: C112–C128 and C127–C189. H188, H209, H218, H341, H345, and H375 together coordinate Cu cation. Residues 192–209 (CNGAYPQVGFTDNDIQVH) constitute a cross-link (2'-(S-cysteinyl)-histidine (Cys-His)).

It belongs to the tyrosinase family. As to quaternary structure, monomer. Requires Cu(2+) as cofactor. As to expression, expressed in immature-green fruit.

The protein localises to the plastid. Its subcellular location is the chloroplast thylakoid lumen. It carries out the reaction 2 catechol + O2 = 2 1,2-benzoquinone + 2 H2O. Its activity is regulated as follows. Activated in the presence of substrate at low pH. Specific activity fluctuates during fruit ripening, starting at immature-green stage, reaching a peak at the breaker stage, followed by a sharp decrease until the half-ripe stage to remain stable during the following development stages. Triggered by CuSO(4) and by low concentrations of SDS. Repressed by several inhibitors including 4-hexylresorcinol, ascorbic acid, benzoic acid, kojic acid, glutathione (reduced form), L-cysteine and sodium metabisulfite. Inhibited by various salt such as FeSO(4), KCl, NaCl, CaCl(2), MnCl(2), NiCl(2) and AlCl(3). Spontaneously activated during storage at 4 degrees Celsius. Catalyzes the oxidation of mono- and o-diphenols to o-diquinones. Uses preferentially 4-methylcatechol and chlorogenic acid as substrates, followed by caffeic acid, pyrogallol, and catechol, but barely active toward dopamine and L-dopa. No activity detected with monophenols (e.g. phenol and tyramine). The protein is Polyphenol oxidase latent form, chloroplastic of Prunus armeniaca (Apricot).